A 320-amino-acid polypeptide reads, in one-letter code: RNA polymerase sigma factor SigA2 (320 aa).

The sigma-70 factor domain-2 stretch occupies residues 89-159 (MIEANLRLVV…TRAIAQQSRT (71 aa)). An Interaction with polymerase core subunit RpoC motif is present at residues 113–116 (DLIQ). Residues 168–243 (EKLNKLKKTQ…EDEQSSPSDY (76 aa)) form a sigma-70 factor domain-3 region. The interval 256–310 (LMAELTPQQQAVIALRYGLDEGDSLSLAKVGERLNISRERVRKLERQAMDHLRRR) is sigma-70 factor domain-4. The segment at residues 282–301 (LAKVGERLNISRERVRKLER) is a DNA-binding region (H-T-H motif).

It belongs to the sigma-70 factor family.

The protein localises to the cytoplasm. Its function is as follows. Sigma factors are initiation factors that promote the attachment of RNA polymerase to specific initiation sites and are then released. This sigma factor is a component of the biological clock pathway that affects the circadian expression of a subset of genes in this bacterium. This Synechococcus elongatus (strain ATCC 33912 / PCC 7942 / FACHB-805) (Anacystis nidulans R2) protein is RNA polymerase sigma factor SigA2 (sigA2).